We begin with the raw amino-acid sequence, 239 residues long: Guanylate kinase (239 aa).

Residues 55-235 (GRIFVITGPS…TLAELQAILL (181 aa)) form the Guanylate kinase-like domain. 62–69 (GPSGVGKS) is an ATP binding site.

The protein belongs to the guanylate kinase family.

The protein resides in the cytoplasm. The catalysed reaction is GMP + ATP = GDP + ADP. Essential for recycling GMP and indirectly, cGMP. This Mycoplasma pneumoniae (strain ATCC 29342 / M129 / Subtype 1) (Mycoplasmoides pneumoniae) protein is Guanylate kinase (gmk).